A 391-amino-acid polypeptide reads, in one-letter code: 4-hydroxy-3-methylbut-2-en-1-yl diphosphate synthase (flavodoxin) (391 aa).

Residues Cys282, Cys285, Cys317, and Glu324 each coordinate [4Fe-4S] cluster.

Belongs to the IspG family. The cofactor is [4Fe-4S] cluster.

The catalysed reaction is (2E)-4-hydroxy-3-methylbut-2-enyl diphosphate + oxidized [flavodoxin] + H2O + 2 H(+) = 2-C-methyl-D-erythritol 2,4-cyclic diphosphate + reduced [flavodoxin]. The protein operates within isoprenoid biosynthesis; isopentenyl diphosphate biosynthesis via DXP pathway; isopentenyl diphosphate from 1-deoxy-D-xylulose 5-phosphate: step 5/6. Its function is as follows. Converts 2C-methyl-D-erythritol 2,4-cyclodiphosphate (ME-2,4cPP) into 1-hydroxy-2-methyl-2-(E)-butenyl 4-diphosphate. This Acidothermus cellulolyticus (strain ATCC 43068 / DSM 8971 / 11B) protein is 4-hydroxy-3-methylbut-2-en-1-yl diphosphate synthase (flavodoxin).